Consider the following 442-residue polypeptide: GTPase HflX (442 aa).

Positions 186–362 (VLVALAGYTN…ALNRVVLKLP (177 aa)) constitute a Hflx-type G domain. GTP contacts are provided by residues 192-199 (GYTNAGKS), 217-221 (FTTLD), 238-241 (DTVG), 306-309 (NKID), and 341-343 (SAR). Mg(2+) is bound by residues Ser-199 and Thr-219.

Belongs to the TRAFAC class OBG-HflX-like GTPase superfamily. HflX GTPase family. As to quaternary structure, monomer. Associates with the 50S ribosomal subunit. Mg(2+) is required as a cofactor.

The protein localises to the cytoplasm. GTPase that associates with the 50S ribosomal subunit and may have a role during protein synthesis or ribosome biogenesis. This chain is GTPase HflX, found in Thermococcus kodakarensis (strain ATCC BAA-918 / JCM 12380 / KOD1) (Pyrococcus kodakaraensis (strain KOD1)).